Here is a 70-residue protein sequence, read N- to C-terminus: ATP synthase subunit c (70 aa).

2 consecutive transmembrane segments (helical) span residues 5–25 and 47–67; these read AAAIAIGLAALGAGIGNGLIV and FIGVALVEAIPIIAVVIAFMV.

The protein belongs to the ATPase C chain family. In terms of assembly, F-type ATPases have 2 components, F(1) - the catalytic core - and F(0) - the membrane proton channel. F(1) has five subunits: alpha(3), beta(3), gamma(1), delta(1), epsilon(1). F(0) has three main subunits: a(1), b(2) and c(10-14). The alpha and beta chains form an alternating ring which encloses part of the gamma chain. F(1) is attached to F(0) by a central stalk formed by the gamma and epsilon chains, while a peripheral stalk is formed by the delta and b chains.

The protein localises to the cell membrane. Functionally, f(1)F(0) ATP synthase produces ATP from ADP in the presence of a proton or sodium gradient. F-type ATPases consist of two structural domains, F(1) containing the extramembraneous catalytic core and F(0) containing the membrane proton channel, linked together by a central stalk and a peripheral stalk. During catalysis, ATP synthesis in the catalytic domain of F(1) is coupled via a rotary mechanism of the central stalk subunits to proton translocation. In terms of biological role, key component of the F(0) channel; it plays a direct role in translocation across the membrane. A homomeric c-ring of between 10-14 subunits forms the central stalk rotor element with the F(1) delta and epsilon subunits. This Anoxybacillus flavithermus (strain DSM 21510 / WK1) protein is ATP synthase subunit c.